A 299-amino-acid chain; its full sequence is Phosphate import ATP-binding protein PstB 1 (299 aa).

The disordered stretch occupies residues 1-51 (MTENEMTSNDSTEPTPTTETAASSPDPSGDPLIEQSIDVEGTDSTAAETGK). Residues 10–27 (DSTEPTPTTETAASSPDP) show a composition bias toward low complexity. Positions 54-294 (IESSDLNVFY…PESQRVEDYI (241 aa)) constitute an ABC transporter domain. An ATP-binding site is contributed by 86-93 (GPSGCGKS).

It belongs to the ABC transporter superfamily. Phosphate importer (TC 3.A.1.7) family. As to quaternary structure, the complex is composed of two ATP-binding proteins (PstB), two transmembrane proteins (PstC and PstA) and a solute-binding protein (PstS).

The protein localises to the cell membrane. The catalysed reaction is phosphate(out) + ATP + H2O = ADP + 2 phosphate(in) + H(+). Part of the ABC transporter complex PstSACB involved in phosphate import. Responsible for energy coupling to the transport system. The chain is Phosphate import ATP-binding protein PstB 1 from Haloarcula marismortui (strain ATCC 43049 / DSM 3752 / JCM 8966 / VKM B-1809) (Halobacterium marismortui).